A 1122-amino-acid polypeptide reads, in one-letter code: RecBCD enzyme subunit RecC (1122 aa).

Belongs to the RecC family. In terms of assembly, heterotrimer of RecB, RecC and RecD. All subunits contribute to DNA-binding. Interacts with YgbT (Cas1). (Microbial infection) Lambda virus GamS protein interacts with the enzyme without displacing any of the subunits.

After reacting with DNA bearing a Chi site the holoenzyme is disassembled and loses exonuclease activity, DNA unwinding and Chi-directed DNA cleavage; RecB remains complexed with ssDNA, which may prevent holoenzyme reassembly. High levels of Mg(2+) (13 mM MgCl(2+)) or incubation with DNase allow holoenzyme reassembly, suggesting it is DNA bound to RecB that prevents reassembly. With respect to regulation, (Microbial infection) RecBCD is inhibited by the lambda virus gam protein (both GamL and GamS isoforms); in vitro a short preincubation prior to adding DNA results in maximal inhibition. Its function is as follows. A helicase/nuclease that prepares dsDNA breaks (DSB) for recombinational DNA repair. Binds to DSBs and unwinds DNA via a rapid (&gt;1 kb/second) and highly processive (&gt;30 kb) ATP-dependent bidirectional helicase. Unwinds dsDNA until it encounters a Chi (crossover hotspot instigator, 5'-GCTGGTGG-3') sequence from the 3' direction. Cuts ssDNA a few nucleotides 3' to Chi site, by nicking one strand or switching the strand degraded (depending on the reaction conditions). The properties and activities of the enzyme are changed at Chi. The Chi-altered holoenzyme produces a long 3'-ssDNA overhang which facilitates RecA-binding to the ssDNA for homologous DNA recombination and repair. Holoenzyme degrades any linearized DNA that is unable to undergo homologous recombination. In the holoenzyme this subunit almost certainly recognizes the wild-type Chi sequence, when added to isolated RecB increases its ATP-dependent helicase processivity. The RecBC complex requires the RecD subunit for nuclease activity, but can translocate along ssDNA in both directions. The RecBCD complex does not unwind G-quadruplex DNA. The polypeptide is RecBCD enzyme subunit RecC (Escherichia coli (strain K12)).